Reading from the N-terminus, the 829-residue chain is MSILSRVSDRRPDLSLVSEEDFPYEQDIVRNPGSTKPWLAYIEYKLQKGTVQEQAYIMERACVQLPRSYKLWKMYLRFRTKHVSKLNAAIFASEYQKVNSLFERALILLNKMPRIWEMYLKFLMQQPLVTHTRRTFDRALRALPITQHNRIWALYRPFANSAEGETAVKIWRRYMQVHPEDAEDFIELLVAVGLYTEAVHKYIEILNNPRFTSKNSKGHYELWSEMVDLLVEHATAVETGHETGIDVERIIRSGIERFADQRGKLWCGLATYWIRRGSFERARDVFEEGITTVMTVRDFTLVFDSYTEFEESIISALMEMASTRAEKGEVDEVADFDLDIRMMRFEHLMDRRPFLLNDVLLRQNPNNVTEWEKRVALWGDNKEEVVKTYLDAIEAIQPKKAVGALHQLWTNYAKFYEAGGDLSSARRIMEKAVKVPYKSVAELADMWIEWAEMELRNECFDEAMKVMAKAVQAPKRSTVDYFDETLSPQQRVHKSWKLWSFYVDLVESVSSLDETRKVYERIFELRIATPQTVVNYANLLEEHKYFEESFKIYERGLDLFSYPVAFELWNLYLTKAVDRKISIERLRDLFEQAVEDCPPKFAKVIYLMYGNLEEERGLARHAMRIYERATRAVADEDRADMFNFYITKSASNFGLPSTRPIYERAIAALPDAEARDMCLKFADMEKRLGEIDRARAIYGHASQFCDPRTNPGFWTKWDQFEVQHGNEDTYKEMLRIKRSVQAQYNTDVNFIASQALARSQQKRMEEEAAGNGGGEMDAEVADAMAQLERQARAPVGFVAASEGPKGGSMPVQPVEVHNPDAIDLDEMDE.

HAT repeat units follow at residues 15–47 (SLVS…YKLQ), 49–81 (GTVQ…FRTK), 93–125 (SEYQ…FLMQ), 127–161 (PLVT…FANS), 163–182 (EGET…PEDA), 277–312 (GSFE…FEES), 380–418 (DNKE…FYEA), 420–456 (GDLS…MELR), 473–505 (APKR…YVDL), 544–578 (KYFE…KAVD), 581–615 (ISIE…LEEE), and 689–723 (GEID…FEVQ). The segment at 799-829 (AASEGPKGGSMPVQPVEVHNPDAIDLDEMDE) is disordered.

This sequence belongs to the crooked-neck family. In terms of assembly, associated with the spliceosome.

It is found in the nucleus. Functionally, involved in pre-mRNA splicing and cell cycle progression. The protein is Pre-mRNA-splicing factor syf1 (msp-41) of Neurospora crassa (strain ATCC 24698 / 74-OR23-1A / CBS 708.71 / DSM 1257 / FGSC 987).